An 850-amino-acid chain; its full sequence is MKNKDSLHVSRRRFLAQLGGLTVAGMLGPSLLTPRSARAADAVAPGAATKEGILTGSHWGAIRATVVDGRFVAAKPFEQDKYPSKMIAGLPDHVHNAARIRYPMVRVDWMRKGHQSDTSQRGDNRFVRVSWDEALDLFYQELERVQKTYGPSALLTASGWQSTGMFHNASGMLARAIALHGNSVSTGGDYSTGAAQVILPRVVGSMEVYEQQTSWPLVLQNSKTIVLWGSDMVKNQQANWWCPDHDVYQYYEQLKEKVASGAISVISIDPVVTSTHDYLGRDKVKHIAINPQTDVPLQLALAHTLYSEKLYDKNFLDNYCVGFDQFLPYLLGEKDGQPKDAAWAEKLCGIDADTIRALARQMAGDRTQIIAGWCVQRMQHGEQWSWMVVVLAAMLGQIGLPGGGFGFGWHYNGAGTPGRKGIILSGFSGSTTVPPVHDSTDYKGYSSTIPIARFMDAILEPGKIINWNGKSVKLPPLKMCVFAGTNPFHRHQQINRIIEGWRKLETVIAIDNQWTSTCRFADIVLPATTQFERNDLDQFGNHSNRGIIAMKQVVSPQFEARNDFDIFRDLCRRFNREAAFTEGLDEMGWLKRIWQEGSQQGKGRGIHLPIFEVFWNQQEYIEFDHPQMFVRHQAFREDPDLEPLGTPSGLIEIYSKTIADMQYDDCQGHPMWFEKIERSHGGPGSQRWPLHLQSVHPDFRLHSQLCESETLRQQYAVGGKEPVFINPQDASARGIRNGDIVRVFNARGQVLAGAVVSDRYAPGVARIHEGAWYDPDKGGDLNALCKYGNPNVLTLDIGTSQLAQATSAHTTLVEIEKYTGPMDNVTAFNGPVEMVAQCEYVPASQGNPHD.

Residues 1 to 39 (MKNKDSLHVSRRRFLAQLGGLTVAGMLGPSLLTPRSARA) constitute a signal peptide (tat-type signal). Ser191 lines the Mo-bis(molybdopterin guanine dinucleotide) pocket.

It belongs to the prokaryotic molybdopterin-containing oxidoreductase family. Mo-bis(molybdopterin guanine dinucleotide) is required as a cofactor. Post-translationally, predicted to be exported by the Tat system. The position of the signal peptide cleavage has not been experimentally proven.

Its subcellular location is the periplasm. The enzyme catalyses trimethylamine + 2 Fe(III)-[cytochrome c] + H2O = trimethylamine N-oxide + 2 Fe(II)-[cytochrome c] + 3 H(+). Its function is as follows. Reduces trimethylamine-N-oxide (TMAO) into trimethylamine; an anaerobic reaction coupled to energy-yielding reactions. This chain is Trimethylamine-N-oxide reductase (torA), found in Salmonella typhimurium (strain LT2 / SGSC1412 / ATCC 700720).